We begin with the raw amino-acid sequence, 104 residues long: N(4)-acetylcytidine amidohydrolase (104 aa).

Positions 6 to 94 (ITFFQRFQND…IAEIYPNQTQ (89 aa)) constitute an ASCH domain. The active-site Proton acceptor is the Lys-21. Catalysis depends on Thr-24, which acts as the Nucleophile. Glu-74 acts as the Proton donor in catalysis.

It belongs to the N(4)-acetylcytidine amidohydrolase family.

It carries out the reaction N(4)-acetylcytidine + H2O = cytidine + acetate + H(+). The catalysed reaction is N(4)-acetyl-2'-deoxycytidine + H2O = 2'-deoxycytidine + acetate + H(+). The enzyme catalyses N(4)-acetylcytosine + H2O = cytosine + acetate + H(+). In terms of biological role, catalyzes the hydrolysis of N(4)-acetylcytidine (ac4C). The sequence is that of N(4)-acetylcytidine amidohydrolase (yqfB) from Salmonella dublin (strain CT_02021853).